A 476-amino-acid chain; its full sequence is Cytochrome c oxidase subunit 1 (476 aa).

Residues 19–39 (LYYLWFSFLFGSYGFLLSVIL) form a helical membrane-spanning segment. Glu-42 serves as a coordination point for Ca(2+). 8 helical membrane passes run 61 to 81 (MIFT…GLFG), 105 to 125 (ISLL…AAEF), 151 to 171 (VIIF…LNFI), 194 to 214 (LIIT…GVLM), 240 to 260 (LFWF…FGVI), 278 to 298 (MILA…HHMY), 310 to 330 (FTST…NWIC), and 345 to 365 (LLSL…VILG). Residue His-66 participates in Fe(II)-heme a binding. His-246 contacts Cu cation. The segment at residues 246–250 (HPEVY) is a cross-link (1'-histidyl-3'-tyrosine (His-Tyr)). Tyr-250 lines the O2 pocket. His-295 and His-296 together coordinate Cu cation. Mg(2+)-binding residues include His-374 and Asp-375. The next 2 membrane-spanning stretches (helical) occupy residues 379–399 (VIAH…FTTV) and 415–435 (SIVI…FLPM). His-382 lines the heme a3 pocket. Position 384 (His-384) interacts with Fe(II)-heme a. A Ca(2+)-binding site is contributed by Pro-448. The helical transmembrane segment at 455–475 (NGWNMICSIGSTMTLFGLLIF) threads the bilayer.

The protein belongs to the heme-copper respiratory oxidase family. Component of the cytochrome c oxidase (complex IV, CIV), a multisubunit enzyme composed of a catalytic core of 3 subunits and several supernumerary subunits. The complex exists as a monomer or a dimer and forms supercomplexes (SCs) in the inner mitochondrial membrane with ubiquinol-cytochrome c oxidoreductase (cytochrome b-c1 complex, complex III, CIII). The cofactor is heme. Requires Cu cation as cofactor.

The protein localises to the mitochondrion inner membrane. It carries out the reaction 4 Fe(II)-[cytochrome c] + O2 + 8 H(+)(in) = 4 Fe(III)-[cytochrome c] + 2 H2O + 4 H(+)(out). The protein operates within energy metabolism; oxidative phosphorylation. Component of the cytochrome c oxidase, the last enzyme in the mitochondrial electron transport chain which drives oxidative phosphorylation. The respiratory chain contains 3 multisubunit complexes succinate dehydrogenase (complex II, CII), ubiquinol-cytochrome c oxidoreductase (cytochrome b-c1 complex, complex III, CIII) and cytochrome c oxidase (complex IV, CIV), that cooperate to transfer electrons derived from NADH and succinate to molecular oxygen, creating an electrochemical gradient over the inner membrane that drives transmembrane transport and the ATP synthase. Cytochrome c oxidase is the component of the respiratory chain that catalyzes the reduction of oxygen to water. Electrons originating from reduced cytochrome c in the intermembrane space (IMS) are transferred via the dinuclear copper A center (CU(A)) of subunit 2 and heme A of subunit 1 to the active site in subunit 1, a binuclear center (BNC) formed by heme A3 and copper B (CU(B)). The BNC reduces molecular oxygen to 2 water molecules using 4 electrons from cytochrome c in the IMS and 4 protons from the mitochondrial matrix. The protein is Cytochrome c oxidase subunit 1 (MT-CO1) of Plasmodium falciparum.